Here is a 72-residue protein sequence, read N- to C-terminus: Translation initiation factor IF-1 (72 aa).

The S1-like domain maps to 1–72 (MAREDHIEME…SKGRIVYRAR (72 aa)).

It belongs to the IF-1 family. In terms of assembly, component of the 30S ribosomal translation pre-initiation complex which assembles on the 30S ribosome in the order IF-2 and IF-3, IF-1 and N-formylmethionyl-tRNA(fMet); mRNA recruitment can occur at any time during PIC assembly.

It localises to the cytoplasm. In terms of biological role, one of the essential components for the initiation of protein synthesis. Stabilizes the binding of IF-2 and IF-3 on the 30S subunit to which N-formylmethionyl-tRNA(fMet) subsequently binds. Helps modulate mRNA selection, yielding the 30S pre-initiation complex (PIC). Upon addition of the 50S ribosomal subunit IF-1, IF-2 and IF-3 are released leaving the mature 70S translation initiation complex. The polypeptide is Translation initiation factor IF-1 (Chromohalobacter salexigens (strain ATCC BAA-138 / DSM 3043 / CIP 106854 / NCIMB 13768 / 1H11)).